We begin with the raw amino-acid sequence, 546 residues long: CTP synthase (546 aa).

Residues 1–266 (MTKYIFVTGG…GDYLVERLGL (266 aa)) are amidoligase domain. Serine 13 contributes to the CTP binding site. Residue serine 13 participates in UTP binding. 14-19 (SVGKGI) contributes to the ATP binding site. Tyrosine 54 contacts L-glutamine. ATP is bound at residue aspartate 71. Mg(2+) is bound by residues aspartate 71 and glutamate 141. Residues 148-150 (DIE), 187-192 (KTKPTQ), and lysine 223 contribute to the CTP site. UTP is bound by residues 187-192 (KTKPTQ) and lysine 223. In terms of domain architecture, Glutamine amidotransferase type-1 spans 291 to 533 (PIALVGKYVE…VAAAAQTLLA (243 aa)). Glycine 353 is a binding site for L-glutamine. The Nucleophile; for glutamine hydrolysis role is filled by cysteine 380. Residues 381 to 384 (LGMQ), glutamate 404, and arginine 461 each bind L-glutamine. Active-site residues include histidine 506 and glutamate 508.

It belongs to the CTP synthase family. Homotetramer.

It catalyses the reaction UTP + L-glutamine + ATP + H2O = CTP + L-glutamate + ADP + phosphate + 2 H(+). It carries out the reaction L-glutamine + H2O = L-glutamate + NH4(+). The catalysed reaction is UTP + NH4(+) + ATP = CTP + ADP + phosphate + 2 H(+). The protein operates within pyrimidine metabolism; CTP biosynthesis via de novo pathway; CTP from UDP: step 2/2. Allosterically activated by GTP, when glutamine is the substrate; GTP has no effect on the reaction when ammonia is the substrate. The allosteric effector GTP functions by stabilizing the protein conformation that binds the tetrahedral intermediate(s) formed during glutamine hydrolysis. Inhibited by the product CTP, via allosteric rather than competitive inhibition. Functionally, catalyzes the ATP-dependent amination of UTP to CTP with either L-glutamine or ammonia as the source of nitrogen. Regulates intracellular CTP levels through interactions with the four ribonucleotide triphosphates. This chain is CTP synthase, found in Chloroflexus aurantiacus (strain ATCC 29366 / DSM 635 / J-10-fl).